Consider the following 407-residue polypeptide: 1-deoxy-D-xylulose 5-phosphate reductoisomerase (407 aa).

6 residues coordinate NADPH: T25, G26, S27, I28, N53, and N136. K137 serves as a coordination point for 1-deoxy-D-xylulose 5-phosphate. NADPH is bound at residue E138. D162 contributes to the Mn(2+) binding site. Residues S163, E164, S188, and H211 each contribute to the 1-deoxy-D-xylulose 5-phosphate site. E164 contacts Mn(2+). An NADPH-binding site is contributed by G217. S224, N229, K230, and E233 together coordinate 1-deoxy-D-xylulose 5-phosphate. E233 lines the Mn(2+) pocket.

The protein belongs to the DXR family. It depends on Mg(2+) as a cofactor. Mn(2+) serves as cofactor.

The catalysed reaction is 2-C-methyl-D-erythritol 4-phosphate + NADP(+) = 1-deoxy-D-xylulose 5-phosphate + NADPH + H(+). The protein operates within isoprenoid biosynthesis; isopentenyl diphosphate biosynthesis via DXP pathway; isopentenyl diphosphate from 1-deoxy-D-xylulose 5-phosphate: step 1/6. Functionally, catalyzes the NADPH-dependent rearrangement and reduction of 1-deoxy-D-xylulose-5-phosphate (DXP) to 2-C-methyl-D-erythritol 4-phosphate (MEP). The protein is 1-deoxy-D-xylulose 5-phosphate reductoisomerase of Nitrobacter hamburgensis (strain DSM 10229 / NCIMB 13809 / X14).